A 54-amino-acid polypeptide reads, in one-letter code: UPF0391 membrane protein Rmet_0093 (54 aa).

The next 2 membrane-spanning stretches (helical) occupy residues 5–25 (ALVF…GIAA) and 30–50 (IAKI…VMGL).

Belongs to the UPF0391 family.

It is found in the cell membrane. The chain is UPF0391 membrane protein Rmet_0093 from Cupriavidus metallidurans (strain ATCC 43123 / DSM 2839 / NBRC 102507 / CH34) (Ralstonia metallidurans).